The chain runs to 308 residues: MTMENYSMAAQFVLDGLTQQAELQLPLFLLFLGIYVVTVVGNLGMILLIAVSPLLHTPMYYFLSSLSFVDFCYSSVITPKMLVNFLGKKNTILYSECMVQLFFFVVFVVAEGYLLTAMAYDRYVAICSPLLYNAIMSSWVCSLLVLAAFFLGFLSALTHTSAMMKLSFCKSHIINHYFCDVLPLLNLSCSNTHLNELLLFIIAGFNTLVPTLAVAVSYAFILYSILHIRSSEGRSKAFGTCSSHLMAVVIFFGSITFMYFKPPSSNSLDQEKVSSVFYTTVIPMLNPLIYSLRNKDVKKALRKVLVGK.

Topologically, residues 1–25 (MTMENYSMAAQFVLDGLTQQAELQL) are extracellular. A glycan (N-linked (GlcNAc...) asparagine) is linked at Asn-5. Residues 26 to 46 (PLFLLFLGIYVVTVVGNLGMI) form a helical membrane-spanning segment. Topologically, residues 47–54 (LLIAVSPL) are cytoplasmic. Residues 55-75 (LHTPMYYFLSSLSFVDFCYSS) traverse the membrane as a helical segment. The Extracellular portion of the chain corresponds to 76–99 (VITPKMLVNFLGKKNTILYSECMV). A disulfide bridge links Cys-97 with Cys-189. A helical membrane pass occupies residues 100–120 (QLFFFVVFVVAEGYLLTAMAY). The Cytoplasmic portion of the chain corresponds to 121–139 (DRYVAICSPLLYNAIMSSW). A helical membrane pass occupies residues 140–160 (VCSLLVLAAFFLGFLSALTHT). The Extracellular segment spans residues 161-197 (SAMMKLSFCKSHIINHYFCDVLPLLNLSCSNTHLNEL). A glycan (N-linked (GlcNAc...) asparagine) is linked at Asn-186. The helical transmembrane segment at 198–217 (LLFIIAGFNTLVPTLAVAVS) threads the bilayer. At 218-237 (YAFILYSILHIRSSEGRSKA) the chain is on the cytoplasmic side. A helical membrane pass occupies residues 238-258 (FGTCSSHLMAVVIFFGSITFM). Topologically, residues 259–271 (YFKPPSSNSLDQE) are extracellular. The helical transmembrane segment at 272–292 (KVSSVFYTTVIPMLNPLIYSL) threads the bilayer. The Cytoplasmic portion of the chain corresponds to 293–308 (RNKDVKKALRKVLVGK).

The protein belongs to the G-protein coupled receptor 1 family. Expressed in the tongue.

The protein resides in the cell membrane. Functionally, odorant receptor (Potential). May be involved in taste perception. The chain is Olfactory receptor 8D1 (OR8D1) from Homo sapiens (Human).